Consider the following 186-residue polypeptide: Lipid A palmitoyltransferase PagP (186 aa).

The signal sequence occupies residues 1 to 25 (MNVSKYVAIFSFVFIQLISVGKVFA). Residues His-58, Asp-101, and Ser-102 contribute to the active site.

This sequence belongs to the lipid A palmitoyltransferase family. In terms of assembly, homodimer.

The protein resides in the cell outer membrane. It carries out the reaction lipid A (E. coli) + a 1-hexadecanoyl-2-acyl-sn-glycero-3-phosphocholine = hepta-acyl lipid A (E. coli) + a 2-acyl-sn-glycero-3-phosphocholine. The catalysed reaction is lipid IIA + a 1-hexadecanoyl-2-acyl-sn-glycero-3-phosphocholine = lipid IIB + a 2-acyl-sn-glycero-3-phosphocholine. It catalyses the reaction lipid IVA (E. coli) + a 1-hexadecanoyl-2-acyl-sn-glycero-3-phosphocholine = lipid IVB (E. coli) + a 2-acyl-sn-glycero-3-phosphocholine. Inhibited by lauryldimethylamine oxide (LDAO) and dodecylphosphocholine (DPC). Functionally, transfers a palmitate residue from the sn-1 position of a phospholipid to the N-linked hydroxymyristate on the proximal unit of lipid A or its precursors. Phosphatidylglycerol (PtdGro), phosphatidylethanolamine (PtdEtn), phosphatidylserine (PtdSer) and phosphatidic acid (Ptd-OH) are all effective acyl donors. The polypeptide is Lipid A palmitoyltransferase PagP (Escherichia coli (strain K12)).